The sequence spans 302 residues: Mitochondrial adapter protein MCP1 (302 aa).

The tract at residues 1-35 (MIKLHEVPPEPVDPASLPHDVNAHSPEGDGNPDKR) is disordered. At 1–61 (MIKLHEVPPE…RFLWNCQKIS (61 aa)) the chain is on the cytoplasmic side. Positions 4-12 (LHEVPPEPV) match the PxP motif. A helical transmembrane segment spans residues 62 to 82 (VLPMALYFPLHAANTLITPAV). The Mitochondrial intermembrane segment spans residues 83 to 100 (SPDSAPDDVLMMVREILP). Residues 101–121 (SITTKLLVAGITLHVSAGVLL) traverse the membrane as a helical segment. Over 122-173 (RIVNNWNKPRRNRHRHLKISAEQDLSQDSIGLTGGISGYLFGLYKTFRIPPQ) the chain is Cytoplasmic. A helical transmembrane segment spans residues 174 to 194 (VISGYILVPVLIYHLLIMKWV). Over 195–219 (PNSISTEVDFASIKQLLSSKNRWWK) the chain is Mitochondrial intermembrane. Residues 220–240 (WLGGLVPLAILLESGVYHIGS) form a helical membrane-spanning segment. The Cytoplasmic portion of the chain corresponds to 241–258 (GLCRYFGVRKMTSRKKWS). A helical membrane pass occupies residues 259–276 (TAINLLTLVGFVSLIRLM). The Mitochondrial intermembrane segment spans residues 277–302 (KEDSTKLGPNQFESIFKKIRLLLHVN).

Interacts (via PxP motif) with VPS13 (via SHR-BD domain).

It localises to the mitochondrion outer membrane. Recruits the lipid transfer protein Vps13 to mitochondria thereby promoting vacuole-mitochondria contacts. Involved in mitochondrial lipid homeostasis. The protein is Mitochondrial adapter protein MCP1 of Saccharomyces cerevisiae (strain ATCC 204508 / S288c) (Baker's yeast).